We begin with the raw amino-acid sequence, 298 residues long: Rhodomycin D methylesterase DnrP (298 aa).

In terms of domain architecture, AB hydrolase-1 spans 25 to 277; it reads PLLLIAGGNL…VEIENMGHAL (253 aa).

It belongs to the methyl esterase DnrP family.

The enzyme catalyses rhodomycin D + H2O = 10-carboxy-13-deoxycarminomycin + methanol + H(+). It carries out the reaction 4-O-methylrhodomycin D + H2O = 10-carboxy-13-deoxydaunorubicin + methanol + H(+). It participates in antibiotic biosynthesis; daunorubicin biosynthesis. The protein operates within antibiotic biosynthesis; carminomycin biosynthesis. Its function is as follows. Involved in the biosynthesis of the anthracyclines carminomycin and daunorubicin (daunomycin) which are aromatic polyketide antibiotics that exhibit high cytotoxicity and are widely applied in the chemotherapy of a variety of cancers. Catalyzes the removal of methyl group from the carbomethoxy group of rhodomycin D (10-carbomethoxy-13-deoxycarminomycin) and 4-O-methylrhodomycin D to yield 10-carboxy-13-deoxycarminomycin and 10-carboxy-13-deoxydaunorubicin, respectively. Could be also involved in the decarboxylation of 10-carboxy-13-deoxycarminomycin and 10-carboxy-13-deoxydaunorubicin to yield 13-deoxycarminomycin and 13-deoxydaunorubicin, respectively. It seems that DnrK may influence the ability of DnrP to carry out the decarboxylation. The sequence is that of Rhodomycin D methylesterase DnrP (dnrP) from Streptomyces peucetius.